The primary structure comprises 190 residues: Cancer-related nucleoside-triphosphatase homolog (190 aa).

Residues 9–16 and 109–116 contribute to the ATP site; these read GPPGVGKT and VCIIDEIG. Lys-165 is modified (N6-acetyllysine).

Belongs to the THEP1 NTPase family. Monomer.

The enzyme catalyses a ribonucleoside 5'-triphosphate + H2O = a ribonucleoside 5'-diphosphate + phosphate + H(+). The catalysed reaction is 5-methyl-UTP + H2O = 5-methyl-UDP + phosphate + H(+). It catalyses the reaction CTP + H2O = CDP + phosphate + H(+). It carries out the reaction ATP + H2O = ADP + phosphate + H(+). The enzyme catalyses GTP + H2O = GDP + phosphate + H(+). Has nucleotide phosphatase activity towards ATP, GTP, CTP, TTP and UTP. Hydrolyzes nucleoside diphosphates with lower efficiency. The protein is Cancer-related nucleoside-triphosphatase homolog of Mus musculus (Mouse).